The sequence spans 718 residues: Threonine--tRNA ligase, mitochondrial (718 aa).

Residue Ser-52 is modified to Phosphoserine. The TGS domain occupies 55–121; the sequence is QKEPRTIKIS…ETDSDLRFLT (67 aa).

This sequence belongs to the class-II aminoacyl-tRNA synthetase family. Homodimer.

The protein localises to the mitochondrion matrix. The enzyme catalyses tRNA(Thr) + L-threonine + ATP = L-threonyl-tRNA(Thr) + AMP + diphosphate + H(+). Functionally, catalyzes the attachment of threonine to tRNA(Thr) in a two-step reaction: threonine is first activated by ATP to form Thr-AMP and then transferred to the acceptor end of tRNA(Thr). Also edits incorrectly charged tRNA(Thr) via its editing domain. The polypeptide is Threonine--tRNA ligase, mitochondrial (TARS2) (Homo sapiens (Human)).